The following is a 730-amino-acid chain: ATP-dependent DNA helicase Hel308 (730 aa).

ATP-binding positions include Gln-28 and 46–53 (IPTASGKT). Residues 33-199 (EKGLLEGKNL…WLDAELVLSE (167 aa)) enclose the Helicase ATP-binding domain. The DEAH box signature appears at 144 to 147 (DEVH). Residues 232 to 433 (AVNLVLDTIK…ALRTHILSTI (202 aa)) form the Helicase C-terminal domain.

The protein belongs to the helicase family. Hel308 subfamily. In terms of assembly, monomer.

It carries out the reaction Couples ATP hydrolysis with the unwinding of duplex DNA by translocating in the 3'-5' direction.. The catalysed reaction is ATP + H2O = ADP + phosphate + H(+). In terms of biological role, DNA-dependent ATPase and 3'-5' DNA helicase that may be involved in repair of stalled replication forks. The chain is ATP-dependent DNA helicase Hel308 from Methanosarcina mazei (strain ATCC BAA-159 / DSM 3647 / Goe1 / Go1 / JCM 11833 / OCM 88) (Methanosarcina frisia).